A 78-amino-acid chain; its full sequence is Acyl carrier protein (78 aa).

Positions 2–77 constitute a Carrier domain; the sequence is SNIEQQVKKI…LAIDYINAHN (76 aa). Ser37 bears the O-(pantetheine 4'-phosphoryl)serine mark.

Belongs to the acyl carrier protein (ACP) family. In terms of processing, 4'-phosphopantetheine is transferred from CoA to a specific serine of apo-ACP by AcpS. This modification is essential for activity because fatty acids are bound in thioester linkage to the sulfhydryl of the prosthetic group.

It is found in the cytoplasm. It functions in the pathway lipid metabolism; fatty acid biosynthesis. Its function is as follows. Carrier of the growing fatty acid chain in fatty acid biosynthesis. The polypeptide is Acyl carrier protein (Neisseria gonorrhoeae (strain ATCC 700825 / FA 1090)).